We begin with the raw amino-acid sequence, 223 residues long: Peptidyl-prolyl cis-trans isomerase FKBP16-3, chloroplastic (223 aa).

The transit peptide at 1 to 36 directs the protein to the chloroplast; sequence MAASSPSLLLPLGSASRNGLTTKNPNSSRYIAARVI. The N-terminal 40 residues, 37 to 76, are a transit peptide targeting the thylakoid; that stretch reads ASETREQSCKISNLSSRREAMLLVLGVSGGLSMSSLAAYA. The region spanning 124–216 is the PPIase FKBP-type domain; sequence GFQVAANYVA…IFDVSLEFIP (93 aa).

Belongs to the FKBP-type PPIase family.

Its subcellular location is the plastid. The protein resides in the chloroplast thylakoid lumen. The catalysed reaction is [protein]-peptidylproline (omega=180) = [protein]-peptidylproline (omega=0). PPIases accelerate the folding of proteins. It catalyzes the cis-trans isomerization of proline imidic peptide bonds in oligopeptides. The sequence is that of Peptidyl-prolyl cis-trans isomerase FKBP16-3, chloroplastic (FKBP16-3) from Arabidopsis thaliana (Mouse-ear cress).